The primary structure comprises 147 residues: uncharacterized protein (147 aa).

This is an uncharacterized protein from Mycoplasma pneumoniae (strain ATCC 29342 / M129 / Subtype 1) (Mycoplasmoides pneumoniae).